A 328-amino-acid chain; its full sequence is DNA-directed RNA polymerase subunit alpha (328 aa).

Residues 1-234 form an alpha N-terminal domain (alpha-NTD) region; that stretch reads MQTAVNEFLT…QQLAVFVDLE (234 aa). Residues 248–328 are alpha C-terminal domain (alpha-CTD); the sequence is IDPILLRPVD…NWPPASLKND (81 aa).

It belongs to the RNA polymerase alpha chain family. In terms of assembly, homodimer. The RNAP catalytic core consists of 2 alpha, 1 beta, 1 beta' and 1 omega subunit. When a sigma factor is associated with the core the holoenzyme is formed, which can initiate transcription.

It catalyses the reaction RNA(n) + a ribonucleoside 5'-triphosphate = RNA(n+1) + diphosphate. DNA-dependent RNA polymerase catalyzes the transcription of DNA into RNA using the four ribonucleoside triphosphates as substrates. The protein is DNA-directed RNA polymerase subunit alpha of Cellvibrio japonicus (strain Ueda107) (Pseudomonas fluorescens subsp. cellulosa).